The following is a 59-amino-acid chain: MLSWALTFLVVAIIAAVLGFTAVAGTAIEIAKIIFYVAIVLFLISAVMGFLRRGSSRTL.

2 helical membrane-spanning segments follow: residues 4-24 (WALT…TAVA) and 30-50 (IAKI…VMGF).

Belongs to the UPF0391 family.

It localises to the cell membrane. This is UPF0391 membrane protein AZC_4184 from Azorhizobium caulinodans (strain ATCC 43989 / DSM 5975 / JCM 20966 / LMG 6465 / NBRC 14845 / NCIMB 13405 / ORS 571).